We begin with the raw amino-acid sequence, 208 residues long: Holliday junction branch migration complex subunit RuvA (208 aa).

The segment at 1 to 63 (MIGMLTGRVE…QDAITLHGFL (63 aa)) is domain I. The domain II stretch occupies residues 64-142 (DRDAKKTFLQ…LSQIEGASAQ (79 aa)). The segment at 143–151 (AATSKSPVD) is flexible linker. The segment at 151-208 (DTGTEQVVEGLISLGWRQQDAQQAVAEACAENDIPTPLATDDVPRVLRLALALMDRGR) is domain III.

Belongs to the RuvA family. Homotetramer. Forms an RuvA(8)-RuvB(12)-Holliday junction (HJ) complex. HJ DNA is sandwiched between 2 RuvA tetramers; dsDNA enters through RuvA and exits via RuvB. An RuvB hexamer assembles on each DNA strand where it exits the tetramer. Each RuvB hexamer is contacted by two RuvA subunits (via domain III) on 2 adjacent RuvB subunits; this complex drives branch migration. In the full resolvosome a probable DNA-RuvA(4)-RuvB(12)-RuvC(2) complex forms which resolves the HJ.

The protein resides in the cytoplasm. Functionally, the RuvA-RuvB-RuvC complex processes Holliday junction (HJ) DNA during genetic recombination and DNA repair, while the RuvA-RuvB complex plays an important role in the rescue of blocked DNA replication forks via replication fork reversal (RFR). RuvA specifically binds to HJ cruciform DNA, conferring on it an open structure. The RuvB hexamer acts as an ATP-dependent pump, pulling dsDNA into and through the RuvAB complex. HJ branch migration allows RuvC to scan DNA until it finds its consensus sequence, where it cleaves and resolves the cruciform DNA. In Bifidobacterium longum (strain DJO10A), this protein is Holliday junction branch migration complex subunit RuvA.